Consider the following 129-residue polypeptide: Glycine cleavage system H protein (129 aa).

Residues 24–106 (SYTVGITEHA…YGEGWFFRVM (83 aa)) form the Lipoyl-binding domain. Lys65 is subject to N6-lipoyllysine.

This sequence belongs to the GcvH family. In terms of assembly, the glycine cleavage system is composed of four proteins: P, T, L and H. It depends on (R)-lipoate as a cofactor.

Functionally, the glycine cleavage system catalyzes the degradation of glycine. The H protein shuttles the methylamine group of glycine from the P protein to the T protein. The polypeptide is Glycine cleavage system H protein (Shewanella baltica (strain OS185)).